A 176-amino-acid chain; its full sequence is Ribosome maturation factor RimM (176 aa).

The PRC barrel domain occupies 93-172; that stretch reads KDEFFQFDII…EILVKGARDI (80 aa).

This sequence belongs to the RimM family. Binds ribosomal protein uS19.

It is found in the cytoplasm. Its function is as follows. An accessory protein needed during the final step in the assembly of 30S ribosomal subunit, possibly for assembly of the head region. Essential for efficient processing of 16S rRNA. May be needed both before and after RbfA during the maturation of 16S rRNA. It has affinity for free ribosomal 30S subunits but not for 70S ribosomes. This Campylobacter concisus (strain 13826) protein is Ribosome maturation factor RimM.